A 44-amino-acid polypeptide reads, in one-letter code: Photosystem I reaction center subunit IX (44 aa).

A helical transmembrane segment spans residues 7 to 27; that stretch reads YLSTAPVLAISWLIFVAGLLI.

Belongs to the PsaJ family.

It is found in the plastid. The protein resides in the chloroplast thylakoid membrane. May help in the organization of the PsaE and PsaF subunits. The polypeptide is Photosystem I reaction center subunit IX (Larix decidua (European larch)).